A 158-amino-acid polypeptide reads, in one-letter code: Small ribosomal subunit protein uS19 (158 aa).

The protein belongs to the universal ribosomal protein uS19 family.

Its function is as follows. Protein S19 forms a complex with S13 that binds strongly to the 16S ribosomal RNA. This chain is Small ribosomal subunit protein uS19, found in Pyrobaculum neutrophilum (strain DSM 2338 / JCM 9278 / NBRC 100436 / V24Sta) (Thermoproteus neutrophilus).